The following is a 174-amino-acid chain: Ribosome maturation factor RimP (174 aa).

The protein belongs to the RimP family.

It localises to the cytoplasm. Functionally, required for maturation of 30S ribosomal subunits. The polypeptide is Ribosome maturation factor RimP (Acinetobacter baumannii (strain AB307-0294)).